A 525-amino-acid chain; its full sequence is uncharacterized protein (525 aa).

6 helical membrane-spanning segments follow: residues 7 to 29 (FLAT…LGQI), 34 to 51 (LRFG…VGAL), 64 to 82 (GLGV…GSTF), 92 to 114 (LMLA…GRLF), 121 to 143 (VAGL…ATHG), and 148 to 170 (LVGY…AIIA). 2 RCK C-terminal domains span residues 178-257 (KDNT…LGHV) and 259-341 (ERTL…LFGD). Transmembrane regions (helical) follow at residues 351 to 370 (ALSL…LMVA), 374 to 396 (GLQF…GSIH), 416 to 438 (LGLM…SQAV), 443 to 465 (LAVI…AAAW), and 502 to 524 (SAYG…VIVL).

The protein belongs to the AAE transporter (TC 2.A.81) family.

It localises to the cell membrane. This is an uncharacterized protein from Cutibacterium acnes (strain DSM 16379 / KPA171202) (Propionibacterium acnes).